Consider the following 397-residue polypeptide: Elongation factor Tu 1 (397 aa).

Residues 10-206 form the tr-type G domain; the sequence is KPHVNIGTIG…AVDENIPQPE (197 aa). The segment at 19 to 26 is G1; that stretch reads GHIDHGKT. Residue 19-26 participates in GTP binding; that stretch reads GHIDHGKT. Mg(2+) is bound at residue threonine 26. The tract at residues 62-66 is G2; sequence GITIS. Residues 83–86 form a G3 region; the sequence is DCPG. GTP is bound by residues 83–87 and 138–141; these read DCPGH and NKAD. The segment at 138-141 is G4; sequence NKAD. The tract at residues 176-178 is G5; sequence SAL.

It belongs to the TRAFAC class translation factor GTPase superfamily. Classic translation factor GTPase family. EF-Tu/EF-1A subfamily. In terms of assembly, monomer.

Its subcellular location is the cytoplasm. It catalyses the reaction GTP + H2O = GDP + phosphate + H(+). Its function is as follows. GTP hydrolase that promotes the GTP-dependent binding of aminoacyl-tRNA to the A-site of ribosomes during protein biosynthesis. The protein is Elongation factor Tu 1 of Streptomyces avermitilis (strain ATCC 31267 / DSM 46492 / JCM 5070 / NBRC 14893 / NCIMB 12804 / NRRL 8165 / MA-4680).